The primary structure comprises 239 residues: Prolyl hydroxylase EGLN3 (239 aa).

The interval 62 to 73 is beta(2)beta(3) 'finger-like' loop; the sequence is AGPRAGVSKRHL. The tract at residues 88-104 is required for interaction with ADRB2; that stretch reads CEAINFLLSLIDRLVLY. A Fe2OG dioxygenase domain is found at 116–214; that stretch reads ERSKAMVACY…RYAMTVWYFD (99 aa). Fe cation-binding residues include histidine 135, aspartate 137, and histidine 196. Arginine 205 serves as a coordination point for 2-oxoglutarate.

As to quaternary structure, interacts with ADRB2; the interaction hydroxylates ADRB2 facilitating its ubiquitination by the VHL-E3 ligase complex. Interacts with PKM; the interaction hydroxylates PKM in hypoxia. Interacts with WDR83; the interaction leads to almost complete elimination of HIF-mediated reporter activity. Interacts with BCL2 (via its BH4 domain); the interaction disrupts the BAX-BCL4 complex inhibiting the anti-apoptotic activity of BCL2. Interacts with LIMD1, WTIP and AJUBA. Fe(2+) serves as cofactor. L-ascorbate is required as a cofactor. In terms of processing, ubiquitinated by SIAH1 and/or SIAH2 in response to the unfolded protein response (UPR), leading to its degradation. Highly expressed in cardiac and smooth muscle. Also high expression in brain, skeletal muscle and kidney. Low levels in lung.

It is found in the nucleus. Its subcellular location is the cytoplasm. The catalysed reaction is L-prolyl-[protein] + 2-oxoglutarate + O2 = trans-4-hydroxy-L-prolyl-[protein] + succinate + CO2. It carries out the reaction L-prolyl-[hypoxia-inducible factor alpha subunit] + 2-oxoglutarate + O2 = trans-4-hydroxy-L-prolyl-[hypoxia-inducible factor alpha subunit] + succinate + CO2. Its function is as follows. Prolyl hydroxylase that mediates hydroxylation of proline residues in target proteins, such as PKM, TELO2, ATF4 and HIF1A. Target proteins are preferentially recognized via a LXXLAP motif. Cellular oxygen sensor that catalyzes, under normoxic conditions, the post-translational formation of 4-hydroxyproline in hypoxia-inducible factor (HIF) alpha proteins. Hydroxylates a specific proline found in each of the oxygen-dependent degradation (ODD) domains (N-terminal, NODD, and C-terminal, CODD) of HIF1A. Also hydroxylates HIF2A. Has a preference for the CODD site for both HIF1A and HIF2A. Hydroxylation on the NODD site by EGLN3 appears to require prior hydroxylation on the CODD site. Hydroxylated HIFs are then targeted for proteasomal degradation via the von Hippel-Lindau ubiquitination complex. Under hypoxic conditions, the hydroxylation reaction is attenuated allowing HIFs to escape degradation resulting in their translocation to the nucleus, heterodimerization with HIF1B, and increased expression of hypoxy-inducible genes. ELGN3 is the most important isozyme in limiting physiological activation of HIFs (particularly HIF2A) in hypoxia. Also hydroxylates PKM in hypoxia, limiting glycolysis. Under normoxia, hydroxylates and regulates the stability of ADRB2. Regulator of cardiomyocyte and neuronal apoptosis. In cardiomyocytes, inhibits the anti-apoptotic effect of BCL2 by disrupting the BAX-BCL2 complex. In neurons, has a NGF-induced proapoptotic effect, probably through regulating CASP3 activity. Also essential for hypoxic regulation of neutrophilic inflammation. Plays a crucial role in DNA damage response (DDR) by hydroxylating TELO2, promoting its interaction with ATR which is required for activation of the ATR/CHK1/p53 pathway. Also mediates hydroxylation of ATF4, leading to decreased protein stability of ATF4. The chain is Prolyl hydroxylase EGLN3 from Mus musculus (Mouse).